Here is a 294-residue protein sequence, read N- to C-terminus: Tissue factor (294 aa).

Positions 1–28 (MAILVRPRLLAALAPTFLGCLLLQVIAG) are cleaved as a signal peptide. Residues 29 to 251 (AGIPEKAFNL…TEQWKSFLGE (223 aa)) are Extracellular-facing. Residues Asn37 and Asn57 are each glycosylated (N-linked (GlcNAc...) asparagine). Residues Cys75 and Cys83 are joined by a disulfide bond. Residues Asn169 and Asn200 are each glycosylated (N-linked (GlcNAc...) asparagine). Cys218 and Cys241 are disulfide-bonded. The short motif at 245–247 (WKS) is the WKS motif element. Residues 252–274 (TLIIVGAVVLLATIFIILLSISL) traverse the membrane as a helical segment. The S-palmitoyl cysteine moiety is linked to residue Cys275. Over 275-294 (CKRRKNRAGQKGKNTPSRLA) the chain is Cytoplasmic.

The protein belongs to the tissue factor family. As to quaternary structure, interacts with HSPE; the interaction, inhibited by heparin, promotes the generation of activated factor X and activates coagulation in the presence of activated factor VII.

It localises to the membrane. Its function is as follows. Initiates blood coagulation by forming a complex with circulating factor VII or VIIa. The [TF:VIIa] complex activates factors IX or X by specific limited proteolysis. TF plays a role in normal hemostasis by initiating the cell-surface assembly and propagation of the coagulation protease cascade. The protein is Tissue factor (F3) of Mus musculus (Mouse).